A 173-amino-acid polypeptide reads, in one-letter code: Signal peptidase complex catalytic subunit sec11 (173 aa).

Over 1–15 (MLGIADMQPRQLAAQ) the chain is Cytoplasmic. Residues 16–36 (ILNFALVLSTAFMMWKGLSVV) traverse the membrane as a helical; Signal-anchor for type II membrane protein segment. At 37 to 173 (SDSPSPIVVV…MGVMVVLQRE (137 aa)) the chain is on the lumenal side. Catalysis depends on charge relay system residues S50, H89, and D115. The tract at residues 159 to 170 (VMLGLMGVMVVL) is C-terminal short (CTS) helix.

It belongs to the peptidase S26B family. Component of the signal peptidase complex (SPC) composed of a catalytic subunit SEC11 and three accessory subunits SPC1, SPC2 and SPC3. The complex induces a local thinning of the ER membrane which is used to measure the length of the signal peptide (SP) h-region of protein substrates. This ensures the selectivity of the complex towards h-regions shorter than 18-20 amino acids. SPC associates with the translocon complex.

Its subcellular location is the endoplasmic reticulum membrane. It catalyses the reaction Cleavage of hydrophobic, N-terminal signal or leader sequences from secreted and periplasmic proteins.. Its function is as follows. Catalytic component of the signal peptidase complex (SPC) which catalyzes the cleavage of N-terminal signal sequences from nascent proteins as they are translocated into the lumen of the endoplasmic reticulum. Specifically cleaves N-terminal signal peptides that contain a hydrophobic alpha-helix (h-region) shorter than 18-20 amino acids. The sequence is that of Signal peptidase complex catalytic subunit sec11 (sec11) from Pyrenophora tritici-repentis (strain Pt-1C-BFP) (Wheat tan spot fungus).